Reading from the N-terminus, the 704-residue chain is Structure-specific endonuclease subunit SLX1 homolog (704 aa).

In terms of domain architecture, GIY-YIG spans 4–90; that stretch reads RFHCVYLLTS…TASARLRHTI (87 aa). Disordered regions lie at residues 157 to 180, 290 to 323, and 354 to 378; these read ESPR…ADGV, ASFA…RVRT, and GAAL…SRPP. 2 stretches are compositionally biased toward polar residues: residues 161 to 175 and 311 to 320; these read VGTQ…SLQG and AGSSTPSPQR. The SLX1-type zinc finger occupies 446 to 526; the sequence is CSLCALPLQP…PSQPCPCPLC (81 aa). 2 disordered regions span residues 601–629 and 650–671; these read VPGA…SSPI and ASLA…GHSN. Residues 650–662 are compositionally biased toward low complexity; that stretch reads ASLAALSPTSASP.

It belongs to the SLX1 family. As to quaternary structure, forms a heterodimer with a member of the SLX4 family. A divalent metal cation is required as a cofactor.

The protein localises to the nucleus. In terms of biological role, catalytic subunit of a heterodimeric structure-specific endonuclease that resolves DNA secondary structures generated during DNA repair and recombination. Has endonuclease activity towards branched DNA substrates, introducing single-strand cuts in duplex DNA close to junctions with ss-DNA. The sequence is that of Structure-specific endonuclease subunit SLX1 homolog from Leishmania major.